Consider the following 166-residue polypeptide: Phosphopantetheine adenylyltransferase (166 aa).

Residue Ser9 coordinates substrate. Residues 9–10 and His17 contribute to the ATP site; that span reads SF. Residues Lys41, Thr74, and Arg88 each contribute to the substrate site. ATP is bound by residues 89-91, Glu99, and 124-130; these read GLR and DSFISSS.

The protein belongs to the bacterial CoaD family. In terms of assembly, homohexamer. Mg(2+) is required as a cofactor.

It is found in the cytoplasm. It catalyses the reaction (R)-4'-phosphopantetheine + ATP + H(+) = 3'-dephospho-CoA + diphosphate. Its pathway is cofactor biosynthesis; coenzyme A biosynthesis; CoA from (R)-pantothenate: step 4/5. Its function is as follows. Reversibly transfers an adenylyl group from ATP to 4'-phosphopantetheine, yielding dephospho-CoA (dPCoA) and pyrophosphate. The protein is Phosphopantetheine adenylyltransferase of Lactobacillus johnsonii (strain CNCM I-12250 / La1 / NCC 533).